Consider the following 507-residue polypeptide: Histidine ammonia-lyase (507 aa).

A cross-link (5-imidazolinone (Ala-Gly)) is located at residues A141 to G143. At S142 the chain carries 2,3-didehydroalanine (Ser).

It belongs to the PAL/histidase family. Post-translationally, contains an active site 4-methylidene-imidazol-5-one (MIO), which is formed autocatalytically by cyclization and dehydration of residues Ala-Ser-Gly.

It is found in the cytoplasm. It carries out the reaction L-histidine = trans-urocanate + NH4(+). It participates in amino-acid degradation; L-histidine degradation into L-glutamate; N-formimidoyl-L-glutamate from L-histidine: step 1/3. This chain is Histidine ammonia-lyase, found in Cereibacter sphaeroides (strain KD131 / KCTC 12085) (Rhodobacter sphaeroides).